A 1217-amino-acid polypeptide reads, in one-letter code: WD repeat-containing protein on Y chromosome (1217 aa).

WD repeat units follow at residues 155–199 (EDMT…LRSA), 323–362 (RIPL…EPSA), 366–405 (GHNG…LLQT), 456–495 (THAA…RKII), 508–547 (TIDI…VVRN), 595–635 (FHTD…RRYN), 740–779 (KVGD…IPEA), and 823–862 (GHLK…LGTL). 2 disordered regions span residues 910 to 929 (QVKR…VEDT) and 1033 to 1217 (AGGQ…KDKP). The segment covering 919–929 (EREDEGEVEDT) has biased composition (acidic residues). Polar residues-rich tracts occupy residues 1041-1054 (RASS…TNSI), 1085-1107 (FGPN…SQLK), and 1137-1179 (PVST…TSAN). Low complexity predominate over residues 1181-1190 (KPDIMPVKIK). Polar residues predominate over residues 1198–1210 (RNTAPVQITTSIA).

The polypeptide is WD repeat-containing protein on Y chromosome (Drosophila mojavensis (Fruit fly)).